The primary structure comprises 394 residues: Phosphopentomutase (394 aa).

Mn(2+) contacts are provided by Asp13, Asp286, His291, Asp327, His328, and His339.

The protein belongs to the phosphopentomutase family. Mn(2+) serves as cofactor.

Its subcellular location is the cytoplasm. It catalyses the reaction 2-deoxy-alpha-D-ribose 1-phosphate = 2-deoxy-D-ribose 5-phosphate. The enzyme catalyses alpha-D-ribose 1-phosphate = D-ribose 5-phosphate. Its pathway is carbohydrate degradation; 2-deoxy-D-ribose 1-phosphate degradation; D-glyceraldehyde 3-phosphate and acetaldehyde from 2-deoxy-alpha-D-ribose 1-phosphate: step 1/2. Functionally, isomerase that catalyzes the conversion of deoxy-ribose 1-phosphate (dRib-1-P) and ribose 1-phosphate (Rib-1-P) to deoxy-ribose 5-phosphate (dRib-5-P) and ribose 5-phosphate (Rib-5-P), respectively. The protein is Phosphopentomutase of Bacillus cereus (strain ATCC 10987 / NRS 248).